Here is a 254-residue protein sequence, read N- to C-terminus: D-aminoacyl-tRNA deacylase (254 aa).

Belongs to the DtdA deacylase family. As to quaternary structure, monomer. The cofactor is Zn(2+).

The catalysed reaction is a D-aminoacyl-tRNA + H2O = a tRNA + a D-alpha-amino acid + H(+). It carries out the reaction glycyl-tRNA(Ala) + H2O = tRNA(Ala) + glycine + H(+). D-aminoacyl-tRNA deacylase with broad substrate specificity. By recycling D-aminoacyl-tRNA to D-amino acids and free tRNA molecules, this enzyme counteracts the toxicity associated with the formation of D-aminoacyl-tRNA entities in vivo. The sequence is that of D-aminoacyl-tRNA deacylase from Methanococcus vannielii (strain ATCC 35089 / DSM 1224 / JCM 13029 / OCM 148 / SB).